A 250-amino-acid polypeptide reads, in one-letter code: Non-specific acid phosphatase (250 aa).

An N-terminal signal peptide occupies residues 1-20 (MKSRYLVFFLPLIVAKYTSA).

This sequence belongs to the class A bacterial acid phosphatase family. In terms of assembly, homodimer.

The protein resides in the periplasm. It catalyses the reaction a phosphate monoester + H2O = an alcohol + phosphate. The chain is Non-specific acid phosphatase (phoN) from Salmonella typhimurium (strain LT2 / SGSC1412 / ATCC 700720).